Consider the following 409-residue polypeptide: S-adenosylmethionine synthase (409 aa).

H15 provides a ligand contact to ATP. Mg(2+) is bound at residue D17. Position 43 (E43) interacts with K(+). Residues E56 and Q100 each contribute to the L-methionine site. Residues 100–110 (QSSDIAQGVNE) form a flexible loop region. Residues 171 to 173 (DGK), 248 to 249 (KF), D257, 263 to 264 (RK), A280, and K284 contribute to the ATP site. Residue D257 coordinates L-methionine. Position 288 (K288) interacts with L-methionine.

Belongs to the AdoMet synthase family. Homotetramer; dimer of dimers. Mg(2+) serves as cofactor. The cofactor is K(+).

It is found in the cytoplasm. The catalysed reaction is L-methionine + ATP + H2O = S-adenosyl-L-methionine + phosphate + diphosphate. It functions in the pathway amino-acid biosynthesis; S-adenosyl-L-methionine biosynthesis; S-adenosyl-L-methionine from L-methionine: step 1/1. Catalyzes the formation of S-adenosylmethionine (AdoMet) from methionine and ATP. The overall synthetic reaction is composed of two sequential steps, AdoMet formation and the subsequent tripolyphosphate hydrolysis which occurs prior to release of AdoMet from the enzyme. This Prochlorococcus marinus (strain NATL2A) protein is S-adenosylmethionine synthase.